The sequence spans 433 residues: MAEKSFKYVIVGGGVSAGYAAREFAKQGVKPGELAIISKEAVAPYERPALSKAYLFPEGAARLPGFHVCVGSGGERQLPEWYAEKGISLILSTEIVKADLASKTLVSAAGESFKYQTLVIATGTTVLKLSDFGVQGADSKNIFYLREIDDADQLVEALKAKKNGKAVVVGGGYIGLELSAVLRLNNIEVNMVYPEPWCMPRLFTEGIAAFYEGYYKNKGVNIIKGTVAVGFDTHPNGEVKEVKLKDGRVLEADIVVVGVGARPLTTLFKGQVEEEKGGIKTDAFFKTSVPDVYAVGDVATFPLKMYNEIRRVEHVDHSRKSAEQAVKAIFASEQGKSVDEYDYLPYFYSRAFDLSWQFYGDNVGETVLFGDADPNSATHKFGQYWIKDGKIVGAFLESGSPEENKAIAKVAKVQPPATLDQLAQEGISFASKI.

FAD-binding positions include 13–16, E40, R47, K52, I95, and 146–147; these read GGVS and RE. Residues 171-177, E195, R201, and G260 contribute to the NAD(+) site; that span reads GGYIGLE. 173 to 177 contributes to the NADP(+) binding site; it reads YIGLE. NADP(+) is bound by residues R201 and G260. Position 297 (D297) interacts with FAD. NAD(+) is bound at residue 313-314; sequence EH. 313–314 contacts NADP(+); it reads EH. FAD is bound at residue V315. R319 contributes to the L-ascorbate binding site. Y348 lines the FAD pocket. Residue Y348 coordinates NAD(+). Y348 contributes to the NADP(+) binding site. R350 provides a ligand contact to L-ascorbate.

This sequence belongs to the FAD-dependent oxidoreductase family. FAD serves as cofactor. Expressed in leaves, and to a lesser degree in stems, roots and all stages of fruit.

The protein localises to the cytoplasm. The catalysed reaction is 2 monodehydro-L-ascorbate radical + NADH + H(+) = 2 L-ascorbate + NAD(+). Functionally, catalyzes the conversion of monodehydroascorbate to ascorbate, oxidizing NADH in the process. This Solanum lycopersicum (Tomato) protein is Monodehydroascorbate reductase.